Consider the following 658-residue polypeptide: DNA mismatch repair protein MutL (658 aa).

Disordered regions lie at residues 114–137 (RQND…PTAA) and 437–456 (RFGN…PLSD). Residues 442–456 (PSETPAPQTDTPLSD) are compositionally biased toward polar residues.

It belongs to the DNA mismatch repair MutL/HexB family.

Functionally, this protein is involved in the repair of mismatches in DNA. It is required for dam-dependent methyl-directed DNA mismatch repair. May act as a 'molecular matchmaker', a protein that promotes the formation of a stable complex between two or more DNA-binding proteins in an ATP-dependent manner without itself being part of a final effector complex. The polypeptide is DNA mismatch repair protein MutL (Neisseria meningitidis serogroup B (strain ATCC BAA-335 / MC58)).